Consider the following 88-residue polypeptide: MSEERNTRKVYQGRVVSDKMNKTITVAVDTYLTHDVYGKRVKYTKKFKAHDENNAAKQGDIVQIMETRPLSATKHFRLVKIVEEAVIL.

It belongs to the universal ribosomal protein uS17 family. As to quaternary structure, part of the 30S ribosomal subunit.

One of the primary rRNA binding proteins, it binds specifically to the 5'-end of 16S ribosomal RNA. This chain is Small ribosomal subunit protein uS17, found in Leuconostoc mesenteroides subsp. mesenteroides (strain ATCC 8293 / DSM 20343 / BCRC 11652 / CCM 1803 / JCM 6124 / NCDO 523 / NBRC 100496 / NCIMB 8023 / NCTC 12954 / NRRL B-1118 / 37Y).